We begin with the raw amino-acid sequence, 178 residues long: Endothelin-2 (178 aa).

An N-terminal signal peptide occupies residues 1 to 24 (MVSVPTTWCSVALALLVALHEGKG). Positions 25–46 (QAAATLEQPASSSHAQGTHLRL) are excised as a propeptide. Disulfide bonds link C49-C63 and C51-C59. A propeptide spanning residues 70–178 (VNTPEQTAPY…RSTHSRWRKR (109 aa)) is cleaved from the precursor. An endothelin-like region spans residues 96-111 (CQCSSARDPACATFCL). Residues 159–178 (KRQQEAMREPRSTHSRWRKR) form a disordered region. Basic and acidic residues predominate over residues 160–170 (RQQEAMREPRS).

This sequence belongs to the endothelin/sarafotoxin family. In terms of tissue distribution, expressed in lung, but not in placental stem villi vessels or cultured placental villi smooth muscle cells.

It localises to the secreted. Its function is as follows. Endothelins are endothelium-derived vasoconstrictor peptides. This is Endothelin-2 (EDN2) from Homo sapiens (Human).